Reading from the N-terminus, the 286-residue chain is ATP synthase gamma chain (286 aa).

It belongs to the ATPase gamma chain family. F-type ATPases have 2 components, CF(1) - the catalytic core - and CF(0) - the membrane proton channel. CF(1) has five subunits: alpha(3), beta(3), gamma(1), delta(1), epsilon(1). CF(0) has three main subunits: a, b and c.

Its subcellular location is the cell inner membrane. Produces ATP from ADP in the presence of a proton gradient across the membrane. The gamma chain is believed to be important in regulating ATPase activity and the flow of protons through the CF(0) complex. The protein is ATP synthase gamma chain of Shewanella sediminis (strain HAW-EB3).